A 142-amino-acid polypeptide reads, in one-letter code: Large ribosomal subunit protein uL13 (142 aa).

This sequence belongs to the universal ribosomal protein uL13 family. As to quaternary structure, part of the 50S ribosomal subunit.

Functionally, this protein is one of the early assembly proteins of the 50S ribosomal subunit, although it is not seen to bind rRNA by itself. It is important during the early stages of 50S assembly. This is Large ribosomal subunit protein uL13 from Actinobacillus succinogenes (strain ATCC 55618 / DSM 22257 / CCUG 43843 / 130Z).